Reading from the N-terminus, the 271-residue chain is Bis(5'-nucleosyl)-tetraphosphatase, symmetrical (271 aa).

It belongs to the Ap4A hydrolase family.

The catalysed reaction is P(1),P(4)-bis(5'-adenosyl) tetraphosphate + H2O = 2 ADP + 2 H(+). Functionally, hydrolyzes diadenosine 5',5'''-P1,P4-tetraphosphate to yield ADP. The sequence is that of Bis(5'-nucleosyl)-tetraphosphatase, symmetrical from Aliivibrio fischeri (strain ATCC 700601 / ES114) (Vibrio fischeri).